The sequence spans 152 residues: Large ribosomal subunit protein bL21 (152 aa).

Residues 115–152 (VTSISNGEKPKKATTSAKPNTKKPSTAVKSSKVEKTPE) form a disordered region. The span at 127–143 (ATTSAKPNTKKPSTAVK) shows a compositional bias: polar residues.

Belongs to the bacterial ribosomal protein bL21 family. Part of the 50S ribosomal subunit. Contacts protein L20.

Functionally, this protein binds to 23S rRNA in the presence of protein L20. The sequence is that of Large ribosomal subunit protein bL21 from Prochlorococcus marinus (strain SARG / CCMP1375 / SS120).